A 310-amino-acid polypeptide reads, in one-letter code: Porphobilinogen deaminase (310 aa).

S-(dipyrrolylmethanemethyl)cysteine is present on Cys-241.

Belongs to the HMBS family. In terms of assembly, monomer. Dipyrromethane serves as cofactor.

It catalyses the reaction 4 porphobilinogen + H2O = hydroxymethylbilane + 4 NH4(+). The protein operates within porphyrin-containing compound metabolism; protoporphyrin-IX biosynthesis; coproporphyrinogen-III from 5-aminolevulinate: step 2/4. Tetrapolymerization of the monopyrrole PBG into the hydroxymethylbilane pre-uroporphyrinogen in several discrete steps. The protein is Porphobilinogen deaminase of Lysinibacillus sphaericus (strain C3-41).